Reading from the N-terminus, the 391-residue chain is Multidrug resistance protein MdtL (391 aa).

The Cytoplasmic portion of the chain corresponds to 1-3; the sequence is MSR. A helical membrane pass occupies residues 4–24; the sequence is FLICSFALVLLYPAGIDMYLV. The Periplasmic segment spans residues 25-41; that stretch reads GLPRIAADLNASEAQLH. Residues 42–62 traverse the membrane as a helical segment; sequence IAFSVYLAGMAAAMLFAGKVA. Topologically, residues 63–68 are cytoplasmic; sequence DRSGRK. The chain crosses the membrane as a helical span at residues 69-89; that stretch reads PVAIPGAALFIIASVFCSLAE. The Periplasmic portion of the chain corresponds to 90-92; that stretch reads TST. A helical transmembrane segment spans residues 93 to 113; the sequence is LFLAGRFLQGLGAGCCYVVAF. Topologically, residues 114–130 are cytoplasmic; the sequence is AILRDTLDDRRRAKVLS. The helical transmembrane segment at 131–151 threads the bilayer; that stretch reads LLNGITCIIPVLAPVLGHLIM. Over 152–157 the chain is Periplasmic; that stretch reads LKFPWQ. A helical membrane pass occupies residues 158 to 178; sequence SLFWAMAMMGIAVLMLSLFIL. Topologically, residues 179–202 are cytoplasmic; it reads KETRPASPAASDKPRENSESLLNR. Residues 203–222 form a helical membrane-spanning segment; it reads FFLSRVVITTLSVSVILTFV. Topologically, residues 223–244 are periplasmic; the sequence is NTSPVLLMEIMGFERGEYATIM. Residues 245–265 form a helical membrane-spanning segment; that stretch reads ALTAGVSMTFSFSTPFALGIF. At 266–268 the chain is on the cytoplasmic side; the sequence is KPR. Residues 269–289 traverse the membrane as a helical segment; sequence TLMITSQVLFLAAGITLAVSP. Residues 290–292 lie on the Periplasmic side of the membrane; that stretch reads SHA. Residues 293-313 traverse the membrane as a helical segment; that stretch reads VSLFGITLICAGFSVGFGVAM. The Cytoplasmic portion of the chain corresponds to 314 to 330; the sequence is SQALGPFSLRAGVASST. Residues 331-351 form a helical membrane-spanning segment; the sequence is LGIAQVCGSSLWIWLAAVVGI. The Periplasmic segment spans residues 352–355; the sequence is GAWN. A helical membrane pass occupies residues 356–376; it reads MLIGILIACSIVSLLLIMFVA. The Cytoplasmic portion of the chain corresponds to 377–391; the sequence is PGRPVAAHEEIHHHA.

This sequence belongs to the major facilitator superfamily. DHA1 family. MdtL (TC 2.A.1.2.22) subfamily.

The protein resides in the cell inner membrane. This Shigella flexneri protein is Multidrug resistance protein MdtL (mdtL).